The following is a 303-amino-acid chain: MNALTSLKLIDGKATAARVLAEVREQVQELRQGGVQPGLVVVLVGADAASQVYVRNKVLRAEEVGIRSQEHRLPADTTQAHLLTLIDRLNRDPEVNGILVQLPLPAHIDEHCVLQAINPLKDVDGFHSENVGGLAQGRDVLTPCTPSGCMRLLRDACGELRGKHAVVVGRSNIVGKPMAALLLQADCTVTVVHSRSRDLPALCRQADILVAAVGKPRLIGADCLKPGAVVIDVGINRINEDGQNHLVGDVDFAAALPQVAGITPVPGGVGPMTIAYLMKNTLLALDLQQQAAHQERTACLSPC.

NADP(+) contacts are provided by residues 169–171 (GRS), S194, and I235.

It belongs to the tetrahydrofolate dehydrogenase/cyclohydrolase family. In terms of assembly, homodimer.

It carries out the reaction (6R)-5,10-methylene-5,6,7,8-tetrahydrofolate + NADP(+) = (6R)-5,10-methenyltetrahydrofolate + NADPH. The catalysed reaction is (6R)-5,10-methenyltetrahydrofolate + H2O = (6R)-10-formyltetrahydrofolate + H(+). The protein operates within one-carbon metabolism; tetrahydrofolate interconversion. Its function is as follows. Catalyzes the oxidation of 5,10-methylenetetrahydrofolate to 5,10-methenyltetrahydrofolate and then the hydrolysis of 5,10-methenyltetrahydrofolate to 10-formyltetrahydrofolate. The protein is Bifunctional protein FolD 2 of Pseudomonas putida (strain GB-1).